The following is a 30-amino-acid chain: Chassatide C3 (30 aa).

Positions 1–30 form a cross-link, cyclopeptide (Gly-Asn); the sequence is GIPCGESCVWIPCISSALGCSCKNKVCYRN. 3 cysteine pairs are disulfide-bonded: C4–C20, C8–C22, and C13–C27.

Post-translationally, this is a cyclic peptide. Expressed in fruit, pedicel, stem and root but not in leaf (at protein level).

Functionally, probably participates in a plant defense mechanism. The sequence is that of Chassatide C3 from Chassalia chartacea (Chassalia curviflora).